The following is a 500-amino-acid chain: Alpha-L-arabinofuranosidase (500 aa).

The N-terminal stretch at 1–21 is a signal peptide; the sequence is MLSNARIIAAGCIAAGSLVAA. Asn-467 is a glycosylation site (N-linked (GlcNAc...) asparagine).

Belongs to the glycosyl hydrolase 54 family.

The enzyme catalyses Hydrolysis of terminal non-reducing alpha-L-arabinofuranoside residues in alpha-L-arabinosides.. The protein operates within glycan metabolism; L-arabinan degradation. The protein is Alpha-L-arabinofuranosidase (abf1) of Hypocrea jecorina (Trichoderma reesei).